The sequence spans 471 residues: UDP-N-acetylmuramate--L-alanine ligase (471 aa).

ATP is bound at residue 114–120 (GTHGKTT).

The protein belongs to the MurCDEF family.

It localises to the cytoplasm. It carries out the reaction UDP-N-acetyl-alpha-D-muramate + L-alanine + ATP = UDP-N-acetyl-alpha-D-muramoyl-L-alanine + ADP + phosphate + H(+). It functions in the pathway cell wall biogenesis; peptidoglycan biosynthesis. In terms of biological role, cell wall formation. In Rhizobium meliloti (strain 1021) (Ensifer meliloti), this protein is UDP-N-acetylmuramate--L-alanine ligase.